An 852-amino-acid chain; its full sequence is MTDTTGKLRAVLLTALMVGSVIGAGVAFTGGAAAANASDLNDYQRFNENTNYTYSTASEDGKTEGSVASGATIFQGEEDVTFRKLDNEKEVSPATLSRTGGSDEGVPLQMPIPEDQSTGSYDSNGPDNDEADFGVTVQSPSVTMLEVRNNADNDVTGGVLNTQQDESSIAVDYNYYAAEDLELTVEDEDGLDVTDEILAADQSGGAYEDGTGNNGPNTLRFDIDPNNVDAGDYTVSVEGVEDLDFGDATESASVTISSSNKASLNLAEDEVVQGANLKYTIENSPEGNYHAVTIDSSDFRDSSSGADAAKVMRSVGDTVDTGLVVDNDSTTEIVDDYENTSISDVDYAYAIVEIDDGNGVGSIETQYLDDSSADIDLYPASDTEDAPDYVNSNEELTNGSALDGVSTDDDTDFDVTQGDITLDNPTGAYVVGSEVDINGTANEGTDDVVLYARDNNDFELVTVDGEKSIEVDSDDTFEEEDITLSDGDKGGDDILGLPGTYRLGIIAKSDAVNSSGGVKDNIDTSDFNQGVSSTSSIRVTDTELTASFETYNGQVADDDNQIDVEGTAPGKDNVAAIIIGSRGKVKFQSISVDSDDTFDEEDIDISELRQGSASAHILSSGRDGKFGEDTANSISDLEDEVGNYTSGSPTGDQIRDRILSNTVDDTASDDLIVTQQFRLVDGLTTIEATEGGEAGGSLTVMGTTNRKADDNTITVELLQGDASIEINSTDEWNSDGQWSVDVPLSNVEPGNYTVEADDGDNTDRQNVEIVEELEEPDQTTVDQPENNQTMTTTMTETTTETTTEMTTTQENTTENGSEGTSDGESGGSIPGFGVGVALVAVLGAALLALRQN.

A signal peptide spans 1-34; that stretch reads MTDTTGKLRAVLLTALMVGSVIGAGVAFTGGAAA. Asparagine 36 is a glycosylation site (N-linked (GalNAc...) (glycosaminoglycan) asparagine). Positions 84–131 are disordered; sequence KLDNEKEVSPATLSRTGGSDEGVPLQMPIPEDQSTGSYDSNGPDNDEA. Over residues 115 to 126 the composition is skewed to polar residues; it reads DQSTGSYDSNGP. N-linked (Glc...) asparagine glycans are attached at residues asparagine 339, asparagine 398, asparagine 438, asparagine 513, asparagine 643, asparagine 727, asparagine 751, and asparagine 787. The interval 772–828 is disordered; sequence ELEEPDQTTVDQPENNQTMTTTMTETTTETTTEMTTTQENTTENGSEGTSDGESGGS. Residues 785–823 are compositionally biased toward low complexity; that stretch reads ENNQTMTTTMTETTTETTTEMTTTQENTTENGSEGTSDG. Residues threonine 789, threonine 791, threonine 792, threonine 793, threonine 795, threonine 797, threonine 798, threonine 799, threonine 801, threonine 802, threonine 803, threonine 806, threonine 807, and threonine 808 are each glycosylated (O-linked (Gal...) threonine). A glycan (N-linked (Glc...) asparagine) is linked at asparagine 811. Threonine 812 and threonine 813 each carry an O-linked (Gal...) threonine glycan. Residue asparagine 815 is glycosylated (N-linked (Glc...) asparagine). A helical membrane pass occupies residues 829-849; it reads IPGFGVGVALVAVLGAALLAL. The PGF sorting signal motif lies at 830-832; it reads PGF.

It belongs to the halobacterial S-layer protein family. In terms of processing, N-linked glycan at Asn-36 consists of a glycosaminoglycan chain, constructed by a repeating sulfated pentasaccharide block composed of GlcNAc, GalNAc, Gal, GalA, 3-O-methyl-GalA, and sulfate in the molar ratio of 1:1:1:1:1:2; the other N-linked glycans contain Glc, GlcA and IdoA. Post-translationally, O-linked glycans consist of Glc-Gal disaccharides. The C-terminus (residues 770-778) is lipidated with diphytanylglyceryl phosphate. In terms of processing, cleaved by the archaeosortase ArtA at the C-terminus, with removal of a short hydrophobic segment.

The protein resides in the secreted. It localises to the cell wall. Its subcellular location is the S-layer. It is found in the cell membrane. Its function is as follows. S-layer protein. The S-layer is a paracrystalline mono-layered assembly of proteins which coat the surface of the cell. In Halobacterium salinarum (strain ATCC 29341 / DSM 671 / R1), this protein is Cell surface glycoprotein (csg).